We begin with the raw amino-acid sequence, 200 residues long: Small ribosomal subunit protein uS4c (200 aa).

Positions Met90–Asn150 constitute an S4 RNA-binding domain.

It belongs to the universal ribosomal protein uS4 family. In terms of assembly, part of the 30S ribosomal subunit. Contacts protein S5. The interaction surface between S4 and S5 is involved in control of translational fidelity.

It is found in the plastid. It localises to the chloroplast. One of the primary rRNA binding proteins, it binds directly to 16S rRNA where it nucleates assembly of the body of the 30S subunit. Functionally, with S5 and S12 plays an important role in translational accuracy. The chain is Small ribosomal subunit protein uS4c (rps4) from Pellia neesiana (Liverwort).